We begin with the raw amino-acid sequence, 62 residues long: UPF0291 protein CLD_1956 (62 aa).

The protein belongs to the UPF0291 family.

The protein localises to the cytoplasm. The chain is UPF0291 protein CLD_1956 from Clostridium botulinum (strain Okra / Type B1).